A 235-amino-acid chain; its full sequence is Large ribosomal subunit protein uL1c (235 aa).

Belongs to the universal ribosomal protein uL1 family. Part of the 50S ribosomal subunit.

It is found in the plastid. Its subcellular location is the chloroplast. Functionally, binds directly to 23S rRNA. Might be involved in E site tRNA release (Potential). The sequence is that of Large ribosomal subunit protein uL1c (rpl1) from Gracilaria tenuistipitata var. liui (Red alga).